Here is a 505-residue protein sequence, read N- to C-terminus: TBC1 domain family member 22B (505 aa).

Alanine 2 bears the N-acetylalanine mark. Residues serine 58 and serine 116 each carry the phosphoserine modification. Residues 105–146 (SKLRVKPERSQSTTSDVPANYKVIKSSSDAQLSRNSSDTCLR) form a disordered region. A compositionally biased stretch (polar residues) spans 129-146 (KSSSDAQLSRNSSDTCLR). Serine 154 carries the post-translational modification Phosphoserine. The Rab-GAP TBC domain occupies 210–434 (GVPREVRPIT…RLWDTYQSEP (225 aa)).

Interacts with ACBD3 and ARFGEF1. Interacts with YWHAB, YWHAE, YWHAG, YWHAH, YWHAQ and YWHAZ.

Its function is as follows. May act as a GTPase-activating protein for Rab family protein(s). In Homo sapiens (Human), this protein is TBC1 domain family member 22B (TBC1D22B).